Reading from the N-terminus, the 556-residue chain is MKSDIEISHQAPLLPIQDIAKKINVDQDDIEFYGKYKAKFSQSIWSKITSKKQGKLVLVTSINPTPAGEGKTTVTVGLGQALNQLGKSAIIALREPSLGPCFGLKGGAAGGGYSQVVPMEDLNLHFTGDFHAITSANNLLAAMLDNSLYQGNPLNINPKKIIFKRCMDMNDRALRHLVIGLGGDKDGVVREDSFVITVASEIMSILCLAKDINDLKQRLARIIVAYNYEGEPVSAEDLNAVGAMATLLKDALNPNLVQTLENTPAIIHGGPFANIAHGCNSLRATKLALQLADITVTEAGFGADLGAEKFFDIKCRIGDLQPDCAVLVVTTKALKYNGGLGKTQWDHENLTALATGIENLGKHIENLKKYGVPVIVTVNAYVTDSAKEHEFIAQYCQQRGCRFAISQVWEKGGAGGIELANQVIDTLENDAPQFQLLYPDNMPLKQKIETIAQEIYGAKGVTYNANAQEMLTKIEDMGFGHFPICMAKTQYSLSDDPALLGRPTDFTINIREVYVSAGAGFVVSLTGTINTMPGLPKKPAAMAMDVDDHGAIKGLF.

65 to 72 (TPAGEGKT) is an ATP binding site.

The protein belongs to the formate--tetrahydrofolate ligase family.

The enzyme catalyses (6S)-5,6,7,8-tetrahydrofolate + formate + ATP = (6R)-10-formyltetrahydrofolate + ADP + phosphate. It functions in the pathway one-carbon metabolism; tetrahydrofolate interconversion. The sequence is that of Formate--tetrahydrofolate ligase from Proteus mirabilis (strain HI4320).